The primary structure comprises 165 residues: Cyclic pyranopterin monophosphate synthase (165 aa).

Substrate-binding positions include 76 to 78 (LCH) and 114 to 115 (ME). Asp-129 is a catalytic residue.

Belongs to the MoaC family. As to quaternary structure, homohexamer; trimer of dimers.

It catalyses the reaction (8S)-3',8-cyclo-7,8-dihydroguanosine 5'-triphosphate = cyclic pyranopterin phosphate + diphosphate. Its pathway is cofactor biosynthesis; molybdopterin biosynthesis. Functionally, catalyzes the conversion of (8S)-3',8-cyclo-7,8-dihydroguanosine 5'-triphosphate to cyclic pyranopterin monophosphate (cPMP). The protein is Cyclic pyranopterin monophosphate synthase of Brucella canis (strain ATCC 23365 / NCTC 10854 / RM-666).